The primary structure comprises 30 residues: Truncated interleukin-1-binding protein (30 aa).

An N-terminal signal peptide occupies residues 1–18; sequence MSILPVIFLPIFFYSSFV.

The protein belongs to the interleukin-1 receptor family.

The sequence is that of Truncated interleukin-1-binding protein from Vaccinia virus (strain Copenhagen) (VACV).